The primary structure comprises 228 residues: 2-C-methyl-D-erythritol 4-phosphate cytidylyltransferase (228 aa).

The protein belongs to the IspD/TarI cytidylyltransferase family. IspD subfamily.

The catalysed reaction is 2-C-methyl-D-erythritol 4-phosphate + CTP + H(+) = 4-CDP-2-C-methyl-D-erythritol + diphosphate. The protein operates within isoprenoid biosynthesis; isopentenyl diphosphate biosynthesis via DXP pathway; isopentenyl diphosphate from 1-deoxy-D-xylulose 5-phosphate: step 2/6. Catalyzes the formation of 4-diphosphocytidyl-2-C-methyl-D-erythritol from CTP and 2-C-methyl-D-erythritol 4-phosphate (MEP). This chain is 2-C-methyl-D-erythritol 4-phosphate cytidylyltransferase, found in Actinobacillus pleuropneumoniae serotype 5b (strain L20).